Here is a 206-residue protein sequence, read N- to C-terminus: 7-methyl-GTP pyrophosphatase (206 aa).

Catalysis depends on Asp-82, which acts as the Proton acceptor.

This sequence belongs to the Maf family. YceF subfamily. It depends on a divalent metal cation as a cofactor.

Its subcellular location is the cytoplasm. It catalyses the reaction N(7)-methyl-GTP + H2O = N(7)-methyl-GMP + diphosphate + H(+). In terms of biological role, nucleoside triphosphate pyrophosphatase that hydrolyzes 7-methyl-GTP (m(7)GTP). May have a dual role in cell division arrest and in preventing the incorporation of modified nucleotides into cellular nucleic acids. In Shewanella denitrificans (strain OS217 / ATCC BAA-1090 / DSM 15013), this protein is 7-methyl-GTP pyrophosphatase.